Reading from the N-terminus, the 188-residue chain is HGPRTase-like protein 1 (188 aa).

It belongs to the purine/pyrimidine phosphoribosyltransferase family. Archaeal HPRT subfamily.

May catalyze a purine salvage reaction, the substrate is unknown. The chain is HGPRTase-like protein 1 from Haloferax volcanii (strain ATCC 29605 / DSM 3757 / JCM 8879 / NBRC 14742 / NCIMB 2012 / VKM B-1768 / DS2) (Halobacterium volcanii).